Here is a 55-residue protein sequence, read N- to C-terminus: ATP synthase protein 8 (55 aa).

A helical membrane pass occupies residues 8-28 (WWIVNFSLIWASVLIVISLLL). Residues 34-55 (NSAGQSSSSLTLNKTTTNWQWL) are disordered. A compositionally biased stretch (low complexity) spans 39–55 (SSSSLTLNKTTTNWQWL).

It belongs to the ATPase protein 8 family. As to quaternary structure, F-type ATPases have 2 components, CF(1) - the catalytic core - and CF(0) - the membrane proton channel.

Its subcellular location is the mitochondrion membrane. Mitochondrial membrane ATP synthase (F(1)F(0) ATP synthase or Complex V) produces ATP from ADP in the presence of a proton gradient across the membrane which is generated by electron transport complexes of the respiratory chain. F-type ATPases consist of two structural domains, F(1) - containing the extramembraneous catalytic core and F(0) - containing the membrane proton channel, linked together by a central stalk and a peripheral stalk. During catalysis, ATP synthesis in the catalytic domain of F(1) is coupled via a rotary mechanism of the central stalk subunits to proton translocation. Part of the complex F(0) domain. Minor subunit located with subunit a in the membrane. The polypeptide is ATP synthase protein 8 (MT-ATP8) (Strongylocentrotus purpuratus (Purple sea urchin)).